We begin with the raw amino-acid sequence, 857 residues long: Median body protein (857 aa).

2 coiled-coil regions span residues 169 to 546 (HNAL…MRTE) and 571 to 793 (LAHL…TKAM).

It is found in the cytoplasm. It localises to the cytoskeleton. Functionally, structural component of the ventral disk involved in maintanance of a domed conformation of the disk required for proper attachment. May have a role in immobilizing the microtubules between cell divisions. The chain is Median body protein from Giardia intestinalis (strain ATCC 50803 / WB clone C6) (Giardia lamblia).